The primary structure comprises 684 residues: Rabphilin-3A (684 aa).

The disordered stretch occupies residues 1–21 (MTDTVVNRWMYPGDGPLQSND). Positions 40–157 (QRKQEELTDE…KRSGAWFFKG (118 aa)) constitute a RabBD domain. The FYVE-type zinc-finger motif lies at 88–145 (GDGVNRCILCGEQLGMLGSACVVCEDCKKNVCTKCGVETSNNRPHPVWLCKICLEQRE). Residues C94, C97, C111, C114, C119, C122, C137, and C140 each contribute to the Zn(2+) site. The disordered stretch occupies residues 162–377 (VLPQPMPIKK…EEEEANSYDS (216 aa)). Basic and acidic residues predominate over residues 199–208 (ARGDMEDRRA). R223 is modified (omega-N-methylarginine). Positions 243 to 252 (RDSEGWDHGH) are enriched in basic and acidic residues. The residue at position 274 (S274) is a Phosphoserine. The span at 283 to 299 (ASMPSPAPPQPVQPGPP) shows a compositional bias: pro residues. Low complexity predominate over residues 301-310 (GSRAAPGPGR). The region spanning 382–504 (TLGALEFSLL…KANQRKNFNI (123 aa)) is the C2 1 domain. Ca(2+)-binding residues include M412, D413, D419, D474, E475, D476, E482, E529, D571, D577, D631, Y632, D633, and D639. Positions 540–673 (ERGKILVSLM…NKDKKIERWH (134 aa)) constitute a C2 2 domain. A phosphoserine mark is found at S682 and S683.

In terms of assembly, interacts with RAB3B, RAB3C, RAB3D, RAB8A, RAB27A and RAB27B. Interacts with RAB3A; this interaction recruits RPH3A to synaptic vesicules. Interacts (via C2B domain) with SNAP25. Interacts with deubiquitinating enzyme CAND1; this interaction results in the deubiquitination of RPH3A. Interacts with GRIN2A and DLG4; this ternary complex regulates NMDA receptor composition at postsynaptic membranes. Interacts with SNCA. The cofactor is Ca(2+). In terms of processing, ubiquitinated. Deubiquitinated by CAND1 to prevent its degradation. In terms of tissue distribution, specifically expressed in brain.

The protein resides in the cytoplasmic vesicle. It localises to the secretory vesicle. It is found in the synaptic vesicle membrane. Its subcellular location is the cell projection. The protein localises to the dendritic spine. The protein resides in the postsynaptic cell membrane. It localises to the membrane. Its function is as follows. Plays an essential role in docking and fusion steps of regulated exocytosis. At the presynaptic level, RPH3A is recruited by RAB3A to the synaptic vesicle membrane in a GTP-dependent manner where it modulates synaptic vesicle trafficking and calcium-triggered neurotransmitter release. In the post-synaptic compartment, forms a ternary complex with GRIN2A and DLG4 and regulates NMDA receptor stability. Also plays a role in the exocytosis of arginine vasopressin hormone. This chain is Rabphilin-3A (Rph3a), found in Rattus norvegicus (Rat).